The chain runs to 1183 residues: PAN2-PAN3 deadenylation complex catalytic subunit PAN2 (1183 aa).

WD repeat units lie at residues 150–189 and 289–328; these read SIENSSPVVKLAPLHRTVLAAGLSGQVTVLDPRTGFKAAQ and DVSSYITSMALSSRGDYLAFGDGDGQLHVWTTNETGENAA. The segment at 331–478 is linker; it reads ENGSIVLPPF…EEIEEELNDG (148 aa). The interval 439–470 is disordered; sequence AEGRARGKGRRDSGPRFRSEKDKKGTYKDKEE. The span at 448–469 shows a compositional bias: basic and acidic residues; that stretch reads RRDSGPRFRSEKDKKGTYKDKE. The region spanning 479 to 864 is the USP domain; the sequence is EVPKYYRKVE…VPAVIILERE (386 aa). The Exonuclease domain occupies 916–1085; the sequence is VAIDAEFVAL…HDSIEDAHFA (170 aa). 4 residues coordinate a divalent metal cation: D919, E921, D1028, and D1081. The disordered stretch occupies residues 1155–1183; the sequence is KSRMATPPPPTKLGLPQWASQNSPSPLRR. Polar residues predominate over residues 1172-1183; that stretch reads WASQNSPSPLRR.

This sequence belongs to the peptidase C19 family. PAN2 subfamily. In terms of assembly, forms a heterotrimer with an asymmetric homodimer of the regulatory subunit PAN3 to form the poly(A)-nuclease (PAN) deadenylation complex. It depends on a divalent metal cation as a cofactor.

The protein resides in the cytoplasm. It catalyses the reaction Exonucleolytic cleavage of poly(A) to 5'-AMP.. Positively regulated by the regulatory subunit PAN3. Catalytic subunit of the poly(A)-nuclease (PAN) deadenylation complex, one of two cytoplasmic mRNA deadenylases involved in mRNA turnover. PAN specifically shortens poly(A) tails of RNA and the activity is stimulated by poly(A)-binding protein PAB1. PAN deadenylation is followed by rapid degradation of the shortened mRNA tails by the CCR4-NOT complex. Deadenylated mRNAs are then degraded by two alternative mechanisms, namely exosome-mediated 3'-5' exonucleolytic degradation, or deadenylation-dependent mRNA decaping and subsequent 5'-3' exonucleolytic degradation by XRN1. May also be involved in post-transcriptional maturation of mRNA poly(A) tails. The chain is PAN2-PAN3 deadenylation complex catalytic subunit PAN2 from Cryptococcus neoformans var. neoformans serotype D (strain B-3501A) (Filobasidiella neoformans).